Consider the following 515-residue polypeptide: ATP synthase subunit alpha (515 aa).

171–178 is a binding site for ATP; it reads GDRQTGKT.

It belongs to the ATPase alpha/beta chains family. As to quaternary structure, F-type ATPases have 2 components, CF(1) - the catalytic core - and CF(0) - the membrane proton channel. CF(1) has five subunits: alpha(3), beta(3), gamma(1), delta(1), epsilon(1). CF(0) has three main subunits: a(1), b(2) and c(9-12). The alpha and beta chains form an alternating ring which encloses part of the gamma chain. CF(1) is attached to CF(0) by a central stalk formed by the gamma and epsilon chains, while a peripheral stalk is formed by the delta and b chains.

It localises to the cell inner membrane. The enzyme catalyses ATP + H2O + 4 H(+)(in) = ADP + phosphate + 5 H(+)(out). In terms of biological role, produces ATP from ADP in the presence of a proton gradient across the membrane. The alpha chain is a regulatory subunit. This is ATP synthase subunit alpha from Xylella fastidiosa (strain 9a5c).